Consider the following 220-residue polypeptide: ATP-dependent dethiobiotin synthetase BioD (220 aa).

Glycine 11–phenylalanine 16 contributes to the ATP binding site. Threonine 15 contributes to the Mg(2+) binding site. Residue lysine 36 is part of the active site. A substrate-binding site is contributed by threonine 40. Residues aspartate 48 and glutamate 107 to glycine 110 each bind ATP. Residues aspartate 48 and glutamate 107 each coordinate Mg(2+).

This sequence belongs to the dethiobiotin synthetase family. In terms of assembly, homodimer. Mg(2+) serves as cofactor.

It is found in the cytoplasm. It carries out the reaction (7R,8S)-7,8-diammoniononanoate + CO2 + ATP = (4R,5S)-dethiobiotin + ADP + phosphate + 3 H(+). Its pathway is cofactor biosynthesis; biotin biosynthesis; biotin from 7,8-diaminononanoate: step 1/2. In terms of biological role, catalyzes a mechanistically unusual reaction, the ATP-dependent insertion of CO2 between the N7 and N8 nitrogen atoms of 7,8-diaminopelargonic acid (DAPA, also called 7,8-diammoniononanoate) to form a ureido ring. This chain is ATP-dependent dethiobiotin synthetase BioD, found in Aquifex aeolicus (strain VF5).